We begin with the raw amino-acid sequence, 58 residues long: U8-ctenitoxin-Pk1a (58 aa).

5 cysteine pairs are disulfide-bonded: C2/C16, C9/C22, C15/C40, C24/C38, and C48/C55.

Expressed by the venom gland.

It is found in the secreted. Its function is as follows. No toxic effects on mice at dose levels of 5 ug per mouse. May be toxic to insects. The chain is U8-ctenitoxin-Pk1a from Phoneutria keyserlingi (Brazilian wandering spider).